The primary structure comprises 389 residues: Mesotocin receptor (389 aa).

Residues Met-1–Val-50 lie on the Extracellular side of the membrane. N-linked (GlcNAc...) asparagine glycosylation is found at Asn-15, Asn-20, Asn-27, and Asn-31. Residues Leu-51 to Ile-71 traverse the membrane as a helical segment. Over Asn-72–Ser-87 the chain is Cytoplasmic. The helical transmembrane segment at Ile-88–Phe-108 threads the bilayer. At Arg-109–Leu-119 the chain is on the extracellular side. A disulfide bridge connects residues Cys-117 and Cys-192. A helical membrane pass occupies residues Val-120–Leu-140. Residues Asp-141 to Cys-159 lie on the Cytoplasmic side of the membrane. The helical transmembrane segment at Val-160–Phe-180 threads the bilayer. The Extracellular portion of the chain corresponds to Ser-181–Thr-207. The helical transmembrane segment at Trp-208–Ile-228 threads the bilayer. The Cytoplasmic portion of the chain corresponds to Ser-229 to Met-275. A helical membrane pass occupies residues Thr-276–Trp-296. Over Ser-297–Ser-308 the chain is Extracellular. A helical transmembrane segment spans residues Leu-309–Met-329. The Cytoplasmic portion of the chain corresponds to Leu-330–Ala-389. The interval Leu-360–Ala-389 is disordered.

This sequence belongs to the G-protein coupled receptor 1 family. Vasopressin/oxytocin receptor subfamily. In terms of tissue distribution, highly expressed in the bladder. Also expressed in kidney, brain and skeletal muscle.

It is found in the cell membrane. Binds to mesotocin and may play a role in the regulation of water and salt transport. The chain is Mesotocin receptor from Rhinella marina (Cane toad).